The chain runs to 262 residues: NADP-dependent mannitol dehydrogenase (262 aa).

Residues I23, D69, N96, and R129 each contribute to the NADP(+) site. S149 acts as the Proton donor in catalysis. NADP(+) contacts are provided by Y169, K173, V202, T204, and Q206. The active-site Proton acceptor is Y169. K173 (lowers pKa of active site Tyr) is an active-site residue.

The protein belongs to the short-chain dehydrogenases/reductases (SDR) family. Homotetramer.

The catalysed reaction is D-mannitol + NADP(+) = D-fructose + NADPH + H(+). The protein is NADP-dependent mannitol dehydrogenase (mtdH) of Agaricus bisporus (White button mushroom).